The chain runs to 329 residues: GMP reductase (329 aa).

The active-site Thioimidate intermediate is cysteine 178. 207 to 230 lines the NADP(+) pocket; it reads VIADGGIRTHGDVAKSIRMGATMV.

This sequence belongs to the IMPDH/GMPR family. GuaC type 2 subfamily.

The catalysed reaction is IMP + NH4(+) + NADP(+) = GMP + NADPH + 2 H(+). Functionally, catalyzes the irreversible NADPH-dependent deamination of GMP to IMP. It functions in the conversion of nucleobase, nucleoside and nucleotide derivatives of G to A nucleotides, and in maintaining the intracellular balance of A and G nucleotides. This chain is GMP reductase, found in Lactococcus lactis subsp. cremoris (strain MG1363).